An 88-amino-acid polypeptide reads, in one-letter code: Small ribosomal subunit protein bS20 (88 aa).

This sequence belongs to the bacterial ribosomal protein bS20 family.

Its function is as follows. Binds directly to 16S ribosomal RNA. The chain is Small ribosomal subunit protein bS20 from Rhodospirillum rubrum (strain ATCC 11170 / ATH 1.1.1 / DSM 467 / LMG 4362 / NCIMB 8255 / S1).